Here is a 315-residue protein sequence, read N- to C-terminus: Eukaryotic translation initiation factor 2 subunit 1 (315 aa).

The S1 motif domain maps to 17–88; sequence EDVVMVNVRS…EKGYIDLSKR (72 aa). At serine 49 the chain carries Phosphoserine; by HRI. Serine 52 bears the Phosphoserine mark. At lysine 141 the chain carries N6-acetyllysine. Serine 158 carries the phosphoserine modification. Phosphothreonine is present on residues threonine 279 and threonine 281. The tract at residues 293 to 315 is disordered; that stretch reads LERENAEVDGDDDAEEMEAKAED. The span at 299-308 shows a compositional bias: acidic residues; it reads EVDGDDDAEE.

This sequence belongs to the eIF-2-alpha family. As to quaternary structure, eukaryotic translation initiation factor 2 eIF2 is a heterotrimeric complex composed of an alpha (EIF2S1), a beta (EIF2S2) and a gamma (EIF2S3) chain. eIF2 is member of the 43S pre-initiation complex (43S PIC). eIF2 forms a complex with at least CELF1/CUGBP1, CALR, CALR3, EIF2S1, EIF2S2, HSP90B1 and HSPA5. Interaction with METAP2 protects EIF2S1 from inhibitory phosphorylation. Interacts with ABCF1. Associates with ribosomes. Interacts with DDX3X in an RNA-independent manner. Phosphorylation at Ser-49 and Ser-52 stabilizes the eIF-2/GDP/eIF2B complex and prevents GDP/GTP exchange reaction, thus impairing the recycling of eIF-2 between successive rounds of initiation and leading to global inhibition of translation, while concomitantly initiating the preferential translation of integrated stress response (ISR)-specific mRNAs. Substrate for at least 4 kinases: EIF2AK1/HRI, EIF2AK2/PKR, EIF2AK3/PERK and EIF2AK4/GCN2. Phosphorylation on Ser-52 by the EIF2AK4/GCN2 protein kinase occurs in response to amino acid starvation and UV irradiation. Phosphorylation at Ser-52 by the EIF2AK3/PERK protein kinase occurs in response to the unfolded protein response. Phosphorylation at Ser-52 by EIF2AK1/HRI in response to mitochondrial damage promotes relocalization to the mitochondrial surface.

The protein resides in the cytoplasm. The protein localises to the stress granule. It localises to the cytosol. Its subcellular location is the mitochondrion. With respect to regulation, activity is regulated by phosphorylation at Ser-49 and Ser-52, which stabilizes the eIF2/GDP/eIF2B complex and prevents the eIF2B-mediated exchange of GDP for GTP, thereby preventing the formation of the 43S pre-initiation complex (43S PIC). This results in the global attenuation of 5' cap-dependent protein synthesis and concomitant translation of ISR-specific mRNAs that contain a short upstream open reading frame (uORF) in their 5' UTR, such as ATF4, ATF5, DDIT3/CHOP and PPP1R15A/GADD34. Its function is as follows. Member of the eIF2 complex that functions in the early steps of protein synthesis by forming a ternary complex with GTP and initiator tRNA. This complex binds to a 40S ribosomal subunit, followed by mRNA binding to form a 43S pre-initiation complex. Junction of the 60S ribosomal subunit to form the 80S initiation complex is preceded by hydrolysis of the GTP bound to eIF2 and release of an eIF2-GDP binary complex. In order for eIF2 to recycle and catalyze another round of initiation, the GDP bound to eIF2 must exchange with GTP by way of a reaction catalyzed by eIF2B. EIF2S1/eIF2-alpha is a key component of the integrated stress response (ISR), required for adaptation to various stress: phosphorylation by metabolic-stress sensing protein kinases (EIF2AK1/HRI, EIF2AK2/PKR, EIF2AK3/PERK and EIF2AK4/GCN2) in response to stress converts EIF2S1/eIF2-alpha in a global protein synthesis inhibitor, leading to a attenuation of cap-dependent translation, while concomitantly initiating the preferential translation of ISR-specific mRNAs, such as the transcriptional activators ATF4 and QRICH1, and hence allowing ATF4- and QRICH1-mediated reprogramming. EIF2S1/eIF2-alpha also acts as an activator of mitophagy in response to mitochondrial damage: phosphorylation by EIF2AK1/HRI promotes relocalization to the mitochondrial surface, thereby triggering PRKN-independent mitophagy. This is Eukaryotic translation initiation factor 2 subunit 1 (EIF2S1) from Pongo abelii (Sumatran orangutan).